The primary structure comprises 250 residues: Vitamin B12 import ATP-binding protein BtuD (250 aa).

The ABC transporter domain maps to 3–233 (LRQASVLPRL…EVLSPVFGVA (231 aa)). An ATP-binding site is contributed by 29–36 (GPNGAGKS).

This sequence belongs to the ABC transporter superfamily. Vitamin B12 importer (TC 3.A.1.13.1) family. The complex is composed of two ATP-binding proteins (BtuD), two transmembrane proteins (BtuC) and a solute-binding protein (BtuF).

The protein resides in the cell inner membrane. It carries out the reaction an R-cob(III)alamin(out) + ATP + H2O = an R-cob(III)alamin(in) + ADP + phosphate + H(+). Its function is as follows. Part of the ABC transporter complex BtuCDF involved in vitamin B12 import. Responsible for energy coupling to the transport system. This is Vitamin B12 import ATP-binding protein BtuD from Pectobacterium atrosepticum (strain SCRI 1043 / ATCC BAA-672) (Erwinia carotovora subsp. atroseptica).